Reading from the N-terminus, the 706-residue chain is Elongation factor G (706 aa).

Positions 8–290 constitute a tr-type G domain; it reads KRYRNIGIVA…GVIEYMPSPT (283 aa). GTP-binding positions include 17 to 24, 88 to 92, and 142 to 145; these read AHVDAGKT, DTPGH, and NKMD.

This sequence belongs to the TRAFAC class translation factor GTPase superfamily. Classic translation factor GTPase family. EF-G/EF-2 subfamily.

The protein localises to the cytoplasm. In terms of biological role, catalyzes the GTP-dependent ribosomal translocation step during translation elongation. During this step, the ribosome changes from the pre-translocational (PRE) to the post-translocational (POST) state as the newly formed A-site-bound peptidyl-tRNA and P-site-bound deacylated tRNA move to the P and E sites, respectively. Catalyzes the coordinated movement of the two tRNA molecules, the mRNA and conformational changes in the ribosome. The sequence is that of Elongation factor G from Chromohalobacter salexigens (strain ATCC BAA-138 / DSM 3043 / CIP 106854 / NCIMB 13768 / 1H11).